We begin with the raw amino-acid sequence, 1006 residues long: E3 ubiquitin-protein ligase MIB1 (1006 aa).

An MIB/HERC2 1 domain is found at Asn-6–Ala-74. Residues His-80 to Ser-132 form a ZZ-type zinc finger. Zn(2+)-binding residues include Cys-85, Cys-88, Cys-100, Cys-103, Cys-109, Cys-112, His-118, and His-122. The region spanning Ser-143–Ala-221 is the MIB/HERC2 2 domain. Position 408 is a phosphoserine (Ser-408). ANK repeat units lie at residues Asp-430–Gly-460, Ala-463–Ala-492, Asp-496–Ala-525, Arg-529–Leu-558, Glu-562–Ile-591, Asn-595–Glu-627, Asp-631–Ile-661, Asn-665–Ile-694, and Asp-698–Ala-729. RING-type zinc fingers lie at residues Cys-819–Lys-854 and Cys-866–Arg-901. A coiled-coil region spans residues Gln-935–Met-962. Residues Cys-963–Arg-996 form an RING-type 3 zinc finger.

Interacts with CEP131 and PCM1. Ubiquitinated; possibly via autoubiquitination. Ubiquitinated; this modification is inhibited in response to cellular stress, such as ultraviolet light (UV) radiation or heat shock. Widely expressed at low level. Expressed at higher level in spinal cord, ovary, whole brain, and all specific brain regions examined.

The protein localises to the cytoplasm. Its subcellular location is the cytoskeleton. It is found in the microtubule organizing center. It localises to the centrosome. The protein resides in the centriolar satellite. The protein localises to the cell membrane. The enzyme catalyses S-ubiquitinyl-[E2 ubiquitin-conjugating enzyme]-L-cysteine + [acceptor protein]-L-lysine = [E2 ubiquitin-conjugating enzyme]-L-cysteine + N(6)-ubiquitinyl-[acceptor protein]-L-lysine.. Its pathway is protein modification; protein ubiquitination. Its function is as follows. E3 ubiquitin-protein ligase that mediates ubiquitination of Delta receptors, which act as ligands of Notch proteins. Positively regulates the Delta-mediated Notch signaling by ubiquitinating the intracellular domain of Delta, leading to endocytosis of Delta receptors. Probably mediates ubiquitination and subsequent proteasomal degradation of DAPK1, thereby antagonizing anti-apoptotic effects of DAPK1 to promote TNF-induced apoptosis. Involved in ubiquitination of centriolar satellite CEP131, CEP290 and PCM1 proteins and hence inhibits primary cilium formation in proliferating cells. Mediates 'Lys-63'-linked polyubiquitination of TBK1, which probably participates in kinase activation. Functionally, (Microbial infection) During adenovirus infection, mediates ubiquitination of Core-capsid bridging protein. This allows viral genome delivery into nucleus for infection. The chain is E3 ubiquitin-protein ligase MIB1 (MIB1) from Homo sapiens (Human).